We begin with the raw amino-acid sequence, 278 residues long: Pantothenate synthetase (278 aa).

ATP is bound at residue 27–34; the sequence is MGNLHEGH. H34 serves as the catalytic Proton donor. Q58 provides a ligand contact to (R)-pantoate. Position 58 (Q58) interacts with beta-alanine. 147 to 150 lines the ATP pocket; it reads GEKD. Position 153 (Q153) interacts with (R)-pantoate. ATP is bound at residue 184 to 187; the sequence is YSSR.

The protein belongs to the pantothenate synthetase family. As to quaternary structure, homodimer.

The protein localises to the cytoplasm. It catalyses the reaction (R)-pantoate + beta-alanine + ATP = (R)-pantothenate + AMP + diphosphate + H(+). It participates in cofactor biosynthesis; (R)-pantothenate biosynthesis; (R)-pantothenate from (R)-pantoate and beta-alanine: step 1/1. Functionally, catalyzes the condensation of pantoate with beta-alanine in an ATP-dependent reaction via a pantoyl-adenylate intermediate. This chain is Pantothenate synthetase, found in Acidithiobacillus ferrooxidans (strain ATCC 23270 / DSM 14882 / CIP 104768 / NCIMB 8455) (Ferrobacillus ferrooxidans (strain ATCC 23270)).